Reading from the N-terminus, the 530-residue chain is UDP-glucuronosyltransferase 1A7 (530 aa).

A signal peptide spans 1–25 (MARAGWTGLLPLYVCLLLTCGFAKA). Residues asparagine 71, asparagine 292, and asparagine 344 are each glycosylated (N-linked (GlcNAc...) asparagine). The helical transmembrane segment at 488–504 (VIGFLLAVVLTVAFITF) threads the bilayer.

The protein belongs to the UDP-glycosyltransferase family. As to quaternary structure, homodimer. Homooligomer. Interacts with UGT1A1, UGT1A3, UGT1A4, UGT1A6, UGT1A8, UGT1A9 and UGT1A10 to form heterodimers. Isoform 1 interacts with isoform 2/i2 suggesting that oligomerization is involved in negative regulation of transferase activity by isoform 2. Isoform 1 also interacts with respective i2 isoforms of UGT1A1, UGT1A3, UGT1A4, UGT1A6, UGT1A8, UGT1A9 and UGT1A10. As to expression, liver and gastric tissue. Isoform 1 and isoform 2 are expressed in esophagus. Neither isoform is expressed in liver, kidney, colon and small intestine.

The protein resides in the endoplasmic reticulum membrane. It carries out the reaction glucuronate acceptor + UDP-alpha-D-glucuronate = acceptor beta-D-glucuronoside + UDP + H(+). The enzyme catalyses 17alpha-estradiol + UDP-alpha-D-glucuronate = 17alpha-estradiol 3-O-(beta-D-glucuronate) + UDP + H(+). It catalyses the reaction prunetin + UDP-alpha-D-glucuronate = prunetin-5-O-beta-D-glucuronide + UDP. The catalysed reaction is 5-epi-5-F2t-IsoP + UDP-alpha-D-glucuronate = 5-epi-5-F2t-IsoP-glucuronide + UDP + H(+). It carries out the reaction (E)-ferulate + UDP-alpha-D-glucuronate = (E)-ferulic acid beta-D-glucuronate ester + UDP. The enzyme catalyses candesartan + UDP-alpha-D-glucuronate = candesartan O-beta-D-glucuronoside + UDP. It catalyses the reaction SN-38 + UDP-alpha-D-glucuronate = SN-38 O-beta-D-glucuronide + UDP + H(+). The catalysed reaction is mycophenolate + UDP-alpha-D-glucuronate = mycophenolate 7-O-beta-D-glucuronide + UDP + H(+). UDP-glucuronosyltransferase (UGT) that catalyzes phase II biotransformation reactions in which lipophilic substrates are conjugated with glucuronic acid to increase the metabolite's water solubility, thereby facilitating excretion into either the urine or bile. Essential for the elimination and detoxification of drugs, xenobiotics and endogenous compounds. Catalyzes the glucuronidation of endogenous estrogen hormone epiestradiol. Involved in the glucuronidation of F2-isoprostane (5-epi-5-F2t-IsoP). Involved in the glucuronidation of the phytochemical ferulic acid at the carboxylic acid group. Also catalyzes the glucuronidation of the isoflavones genistein, daidzein, glycitein, formononetin, biochanin A and prunetin, which are phytoestrogens with anticancer and cardiovascular properties. Involved in the glucuronidation of the AGTR1 angiotensin receptor antagonist caderastan, a drug which can inhibit the effect of angiotensin II. Involved in the biotransformation of 7-ethyl-10-hydroxycamptothecin (SN-38), the pharmacologically active metabolite of the anticancer drug irinotecan. Also metabolizes mycophenolate, an immunosuppressive agent. In terms of biological role, lacks UGT glucuronidation activity but acts as a negative regulator of isoform 1. This is UDP-glucuronosyltransferase 1A7 from Homo sapiens (Human).